The primary structure comprises 337 residues: L-Ala-D/L-amino acid epimerase (337 aa).

Substrate contacts are provided by residues Thr-129 and 151–153 (KIK). Asp-177, Glu-203, and Asp-228 together coordinate Mg(2+). Residues Lys-250 and 300–302 (DMD) each bind substrate.

It belongs to the mandelate racemase/muconate lactonizing enzyme family. Mg(2+) serves as cofactor.

Its function is as follows. Broad specificity dipeptide epimerase. Catalyzes the epimerization of L-Ala-L-Ala, L-Ala-L-Glu, L-Ala-L-Ser, L-Ala-L-Thr and L-Ala-L-Met (in vitro). The protein is L-Ala-D/L-amino acid epimerase of Maribacter sp. (strain HTCC2170 / KCCM 42371).